Reading from the N-terminus, the 251-residue chain is Hydroxyacylglutathione hydrolase (251 aa).

Residues His-53, His-55, Asp-57, His-58, His-110, Asp-127, and His-165 each coordinate Zn(2+).

The protein belongs to the metallo-beta-lactamase superfamily. Glyoxalase II family. Monomer. It depends on Zn(2+) as a cofactor.

It catalyses the reaction an S-(2-hydroxyacyl)glutathione + H2O = a 2-hydroxy carboxylate + glutathione + H(+). The protein operates within secondary metabolite metabolism; methylglyoxal degradation; (R)-lactate from methylglyoxal: step 2/2. Functionally, thiolesterase that catalyzes the hydrolysis of S-D-lactoyl-glutathione to form glutathione and D-lactic acid. The sequence is that of Hydroxyacylglutathione hydrolase from Buchnera aphidicola subsp. Acyrthosiphon pisum (strain APS) (Acyrthosiphon pisum symbiotic bacterium).